The primary structure comprises 423 residues: COP9 signalosome complex subunit 3 (423 aa).

The 169-residue stretch at 197–365 (NFERALYFYE…GMVCFHDNPE (169 aa)) folds into the PCI domain. The segment at 403–423 (FVQKSMGSQDDDSGSKPSSYS) is disordered.

It belongs to the CSN3 family. As to quaternary structure, component of the CSN complex, probably composed of cops1, cops2, cops3, cops4, cops5, cops6, cops7, cops8 and cops9.

The protein resides in the cytoplasm. It is found in the nucleus. In terms of biological role, component of the COP9 signalosome complex (CSN), a complex involved in various cellular and developmental processes. The CSN complex is an essential regulator of the ubiquitin (Ubl) conjugation pathway by mediating the deneddylation of the cullin subunits of E3 ligase complexes, leading to modify the Ubl ligase activity. This is COP9 signalosome complex subunit 3 (cops3) from Xenopus tropicalis (Western clawed frog).